A 363-amino-acid polypeptide reads, in one-letter code: tRNA N6-adenosine threonylcarbamoyltransferase (363 aa).

2 residues coordinate Fe cation: His-127 and His-131. Residues Leu-150–Gly-154, Asp-183, Gly-196, and Asn-290 contribute to the substrate site. Residue Asp-318 participates in Fe cation binding.

This sequence belongs to the KAE1 / TsaD family. Fe(2+) serves as cofactor.

The protein resides in the cytoplasm. The enzyme catalyses L-threonylcarbamoyladenylate + adenosine(37) in tRNA = N(6)-L-threonylcarbamoyladenosine(37) in tRNA + AMP + H(+). Functionally, required for the formation of a threonylcarbamoyl group on adenosine at position 37 (t(6)A37) in tRNAs that read codons beginning with adenine. Is involved in the transfer of the threonylcarbamoyl moiety of threonylcarbamoyl-AMP (TC-AMP) to the N6 group of A37, together with TsaE and TsaB. TsaD likely plays a direct catalytic role in this reaction. In Zymomonas mobilis subsp. mobilis (strain ATCC 31821 / ZM4 / CP4), this protein is tRNA N6-adenosine threonylcarbamoyltransferase.